Here is a 104-residue protein sequence, read N- to C-terminus: Phosphocarrier protein HPr (104 aa).

The HPr domain occupies 17-104; that stretch reads ELSAIFMIRN…EVFNSGFGEL (88 aa). His31 functions as the Pros-phosphohistidine intermediate in the catalytic mechanism.

This sequence belongs to the HPr family.

It localises to the cytoplasm. Its function is as follows. General (non sugar-specific) component of the phosphoenolpyruvate-dependent sugar phosphotransferase system (sugar PTS). This major carbohydrate active-transport system catalyzes the phosphorylation of incoming sugar substrates concomitantly with their translocation across the cell membrane. The phosphoryl group from phosphoenolpyruvate (PEP) is transferred to the phosphoryl carrier protein HPr by enzyme I. Phospho-HPr then transfers it to the PTS EIIA domain. This Chlamydia muridarum (strain MoPn / Nigg) protein is Phosphocarrier protein HPr (ptsH).